The chain runs to 482 residues: Beta-1,3-glucan-binding protein 2 (482 aa).

The signal sequence occupies residues 1 to 18 (MWIKSVCLFATIAGCLGQ). One can recognise a CBM39 domain in the interval 23–122 (YKVPDAKLEA…GEWTVTEFVN (100 aa)). Asn124 is a glycosylation site (N-linked (GlcNAc...) asparagine). A disordered region spans residues 127–153 (VVDTSTAPPPVAPAVSEEDQSPGPQWR). Residues 128 to 482 (VDTSTAPPPV…KVDYVRVYAL (355 aa)) enclose the GH16 domain. Asn189 is a glycosylation site (N-linked (GlcNAc...) asparagine).

As to quaternary structure, monomer. N-glycosylated. In terms of tissue distribution, cuticle and fat body.

Its subcellular location is the secreted. Involved in the recognition of invading microorganisms. Binds specifically to beta-1,3-glucan and lipoteichoic acid and causes aggregation of invading microorganisms. Binding to beta-1,3-glucan activates the phenoloxidase cascade. This chain is Beta-1,3-glucan-binding protein 2, found in Manduca sexta (Tobacco hawkmoth).